We begin with the raw amino-acid sequence, 149 residues long: Glycine cleavage system H protein (149 aa).

The Lipoyl-binding domain maps to 23 to 104 (LIWVGISNHA…PYGIWLFKIN (82 aa)). Position 64 is an N6-lipoyllysine (Lys64).

Belongs to the GcvH family. In terms of assembly, the glycine cleavage system is composed of four proteins: P, T, L and H. The cofactor is (R)-lipoate.

In terms of biological role, the glycine cleavage system catalyzes the degradation of glycine. The H protein shuttles the methylamine group of glycine from the P protein to the T protein. The polypeptide is Glycine cleavage system H protein (Polynucleobacter necessarius subsp. necessarius (strain STIR1)).